Consider the following 125-residue polypeptide: Small ribosomal subunit protein uS12 (125 aa).

The disordered stretch occupies residues 1–30; the sequence is MPTISQLVRKPRAAKPLKSKVPALGNSPQK. Residues 9-18 show a composition bias toward basic residues; it reads RKPRAAKPLK. Asp-89 carries the 3-methylthioaspartic acid modification. The tract at residues 103–125 is disordered; it reads DTAGVKDRKQGRSKYGAKKPKSA. Residues 113-125 are compositionally biased toward basic residues; it reads GRSKYGAKKPKSA.

Belongs to the universal ribosomal protein uS12 family. Part of the 30S ribosomal subunit. Contacts proteins S8 and S17. May interact with IF1 in the 30S initiation complex.

With S4 and S5 plays an important role in translational accuracy. Functionally, interacts with and stabilizes bases of the 16S rRNA that are involved in tRNA selection in the A site and with the mRNA backbone. Located at the interface of the 30S and 50S subunits, it traverses the body of the 30S subunit contacting proteins on the other side and probably holding the rRNA structure together. The combined cluster of proteins S8, S12 and S17 appears to hold together the shoulder and platform of the 30S subunit. The chain is Small ribosomal subunit protein uS12 from Nitrosospira multiformis (strain ATCC 25196 / NCIMB 11849 / C 71).